The sequence spans 275 residues: NAD(P)H-hydrate epimerase (275 aa).

The YjeF N-terminal domain maps to 49–258 (AIKIDQELFS…ALAAKYELNL (210 aa)). Residue 102–106 (NNGGD) coordinates (6S)-NADPHX. Residues Asn-103 and Asp-167 each contribute to the K(+) site. (6S)-NADPHX contacts are provided by residues 171 to 177 (GFSFKPP) and Asp-200. K(+) is bound at residue Ser-203.

It belongs to the NnrE/AIBP family. K(+) serves as cofactor.

The catalysed reaction is (6R)-NADHX = (6S)-NADHX. The enzyme catalyses (6R)-NADPHX = (6S)-NADPHX. In terms of biological role, catalyzes the epimerization of the S- and R-forms of NAD(P)HX, a damaged form of NAD(P)H that is a result of enzymatic or heat-dependent hydration. This is a prerequisite for the S-specific NAD(P)H-hydrate dehydratase to allow the repair of both epimers of NAD(P)HX. This is NAD(P)H-hydrate epimerase from Ixodes scapularis (Black-legged tick).